Here is a 237-residue protein sequence, read N- to C-terminus: MRPSKRTPAQTRPITITRNFTAHAEGSVLVEFGETKVLCTASFTEGVPRFLKGQGQGWVTAEYGMLPRSTHSRMDREAARGKQSGRTQEIQRLIGRSLRAAVDMKALGENTIVIDCDVIQADGGTRTAAITGACVAMVDALNWARAKNIIKSNPLKFLIAAVSVGIYKGEAISDLEYLEDSAAETDMNVVMTETGKIIEVQGTAEGEPFSHEELNELLGLAKNSIREIVDVQKSALN.

Phosphate contacts are provided by residues arginine 86 and 124-126; that span reads GTR.

It belongs to the RNase PH family. Homohexameric ring arranged as a trimer of dimers.

It carries out the reaction tRNA(n+1) + phosphate = tRNA(n) + a ribonucleoside 5'-diphosphate. In terms of biological role, phosphorolytic 3'-5' exoribonuclease that plays an important role in tRNA 3'-end maturation. Removes nucleotide residues following the 3'-CCA terminus of tRNAs; can also add nucleotides to the ends of RNA molecules by using nucleoside diphosphates as substrates, but this may not be physiologically important. Probably plays a role in initiation of 16S rRNA degradation (leading to ribosome degradation) during starvation. The chain is Ribonuclease PH from Shewanella denitrificans (strain OS217 / ATCC BAA-1090 / DSM 15013).